A 702-amino-acid polypeptide reads, in one-letter code: Kinesin-like protein KIF3A (702 aa).

In terms of domain architecture, Kinesin motor spans 14–345 (NVKVVVRCRP…LRYANRAKNI (332 aa)). Residue 100–107 (GQTGTGKT) participates in ATP binding. Residues 355 to 593 (PKDALLRQFQ…LSRELRLQML (239 aa)) are a coiled coil. Disordered stretches follow at residues 372–424 (KKLE…KMIE) and 667–702 (LMKL…SLLQ). The segment covering 376–400 (EGEEISGSDISGSEEDDDEEGEVGE) has biased composition (acidic residues). Residues 410-424 (DQAGKKKVSPDKMIE) are compositionally biased toward basic and acidic residues. A globular region spans residues 600 to 702 (PRDYQEMIEN…PETVIDSLLQ (103 aa)). The span at 675 to 690 (TSKGKARPKTGRRKRS) shows a compositional bias: basic residues. A Phosphoserine modification is found at serine 690.

Belongs to the TRAFAC class myosin-kinesin ATPase superfamily. Kinesin family. Kinesin II subfamily. As to quaternary structure, heterodimer of KIF3A and KIF3B. Interacts with CIMAP3. Interacts with CLN3. Interacts with DCTN1. Interacts with FLCN. Interacts with AP3B1.

Its subcellular location is the cytoplasm. It localises to the cytoskeleton. The protein localises to the cell projection. It is found in the cilium. The protein resides in the microtubule organizing center. Its subcellular location is the centrosome. It localises to the centriole. Microtubule-based anterograde translocator for membranous organelles. Plus end-directed microtubule sliding activity in vitro. Plays a role in primary cilia formation. Plays a role in centriole cohesion and subdistal appendage organization and function. Regulates the formation of the subdistal appendage via recruitment of DCTN1 to the centriole. Also required for ciliary basal feet formation and microtubule anchoring to mother centriole. In Macaca fascicularis (Crab-eating macaque), this protein is Kinesin-like protein KIF3A (KIF3A).